We begin with the raw amino-acid sequence, 452 residues long: FAD transporter (452 aa).

The next 12 helical transmembrane spans lie at 21–41 (LPNLIGIMTILGFSLADTFFI), 49–69 (LAAISFTFPVTLIISSIAIGV), 96–116 (ALLLTFILIASLSALGSIFIE), 131–151 (LIHDYMMYWYVGAPLLVLLMV), 167–187 (MIMTLAAIINLILDPLLIFGI), 199–219 (AIATLFSWLVALSLSGYLLII), 248–270 (AALMNLINPLANAVIMAMLAHID), 283–303 (LESVLLIVVMALSSSLMPFIA), 324–344 (FILVFQTLLYIPLAFFAQPLA), 357–377 (LSFYILVLPCAYGPLGIVIIF), 392–412 (VINLCRLVLLMLPLAALGSYI), and 417–437 (GLLLALPITNLLMGIACYYLA).

Belongs to the multi antimicrobial extrusion (MATE) (TC 2.A.66.1) family.

The protein localises to the cell inner membrane. Functionally, flavin adenine dinucleotide (FAD) transporter that facilitates export of flavin electron shuttles. This is FAD transporter from Shewanella oneidensis (strain ATCC 700550 / JCM 31522 / CIP 106686 / LMG 19005 / NCIMB 14063 / MR-1).